The sequence spans 685 residues: Sodium/glucose cotransporter 4 (685 aa).

The tract at residues 1 to 20 (MNTELVAMEPGVSRNGVRTE) is disordered. Residues 1–32 (MNTELVAMEPGVSRNGVRTETTTNPSLGLHTY) lie on the Extracellular side of the membrane. A helical membrane pass occupies residues 33-53 (DIVVVVIYFVFVLAVGIWSSI). Topologically, residues 54 to 71 (RASRGTVGGYFLAGRSMT) are cytoplasmic. Residues 72 to 94 (WWPIGASLMSSNVGSGLFIGLAG) traverse the membrane as a helical segment. The Extracellular portion of the chain corresponds to 95–110 (TGAAGGLAVGGFEWNA). A helical transmembrane segment spans residues 111–131 (TFLLLALGWIFVPVYIAAGVV). Topologically, residues 132–153 (TMPQYLKKRFGGQRIQVYMSVL) are cytoplasmic. A helical transmembrane segment spans residues 154–174 (SLILYIFTKISTDIFSGALFI). Topologically, residues 175–186 (QMALGWNLYLST) are extracellular. Residues 187 to 207 (VILLVVTAVYTIAGGLTAVIY) traverse the membrane as a helical segment. Residues 208–213 (TDALQT) lie on the Cytoplasmic side of the membrane. A helical membrane pass occupies residues 214–234 (VIMVGGALVLMFLGFQEVGWY). Over 235–271 (PGLQQLYRQAIPNTTVPNTTCHLPRPDAFHMLRDPVN) the chain is Extracellular. Asn247 carries N-linked (GlcNAc...) asparagine glycosylation. Residues 272 to 292 (GDIPWPGLIFGLTVLATWCWC) traverse the membrane as a helical segment. Residues 293–313 (TDQVIVQRSLAAKNLSHAKGG) lie on the Cytoplasmic side of the membrane. The chain crosses the membrane as a helical span at residues 314–334 (SVLGGYLKILPMFFIVMPGMI). Topologically, residues 335-379 (SRALYPDEVACVDPDICQRVCGARVGCSNIAYPKLVMALMPVGLR) are extracellular. The chain crosses the membrane as a helical span at residues 380 to 402 (GLMIAVIMAALMSSLTSIFNSSS). The Cytoplasmic segment spans residues 403–423 (TLFAIDVWQRFRRQASEQELM). Residues 424–444 (VVGRLFVVFLVVISILWIPII) form a helical membrane-spanning segment. Over 445-455 (QSSNSGQLFDY) the chain is Extracellular. The chain crosses the membrane as a helical span at residues 456–476 (IQSITSYLAPPITALFLLAIF). Residues 477–483 (CKRVNEP) are Cytoplasmic-facing. A helical transmembrane segment spans residues 484 to 504 (GAFWGLMFGLVVGILRMILEF). Topologically, residues 505–526 (SYSAPACGEMDRRPAVLKDFHY) are extracellular. A helical membrane pass occupies residues 527–547 (LYFALLLCGLTAIIIVVISFF). The Cytoplasmic segment spans residues 548–664 (TEPIPDDKLA…SIEEEPLWRR (117 aa)). The tract at residues 577–616 (VSVNNTEDDNSPGLAGRPVVEGPAGDEEEANTTQGPEQPG) is disordered. A helical membrane pass occupies residues 665 to 685 (VCNINAIILLAINIFLWGYFA).

Belongs to the sodium:solute symporter (SSF) (TC 2.A.21) family.

Its subcellular location is the cell membrane. It carries out the reaction D-mannose(out) + n Na(+)(out) = D-mannose(in) + n Na(+)(in). Functionally, electrogenic Na(+)-coupled sugar symporter that may play a primary role in D-mannose and possibly D-fructose and D-glucose transport at the plasma membrane. Transporter activity is driven by a transmembrane Na(+) electrochemical gradient set by the Na(+)/K(+) pump. Exclusively recognizes sugar substrates having a pyranose ring with an axial hydroxyl group on carbon 2. In Mus musculus (Mouse), this protein is Sodium/glucose cotransporter 4 (Slc5a9).